We begin with the raw amino-acid sequence, 436 residues long: D-aminoacyl-tRNA deacylase (436 aa).

Belongs to the DtdA deacylase family. In terms of assembly, monomer. Zn(2+) serves as cofactor.

The enzyme catalyses a D-aminoacyl-tRNA + H2O = a tRNA + a D-alpha-amino acid + H(+). The catalysed reaction is glycyl-tRNA(Ala) + H2O = tRNA(Ala) + glycine + H(+). In terms of biological role, D-aminoacyl-tRNA deacylase with broad substrate specificity. By recycling D-aminoacyl-tRNA to D-amino acids and free tRNA molecules, this enzyme counteracts the toxicity associated with the formation of D-aminoacyl-tRNA entities in vivo. This chain is D-aminoacyl-tRNA deacylase, found in Methanoregula boonei (strain DSM 21154 / JCM 14090 / 6A8).